Consider the following 209-residue polypeptide: Ribosomal RNA small subunit methyltransferase G (209 aa).

S-adenosyl-L-methionine is bound by residues Gly-71, Phe-76, 122–123 (AE), and Arg-135.

The protein belongs to the methyltransferase superfamily. RNA methyltransferase RsmG family.

The protein resides in the cytoplasm. Functionally, specifically methylates the N7 position of a guanine in 16S rRNA. In Phocaeicola vulgatus (strain ATCC 8482 / DSM 1447 / JCM 5826 / CCUG 4940 / NBRC 14291 / NCTC 11154) (Bacteroides vulgatus), this protein is Ribosomal RNA small subunit methyltransferase G.